A 224-amino-acid chain; its full sequence is Jacalin-related lectin 24 (224 aa).

One can recognise a Jacalin-type lectin domain in the interval 8 to 160 (MFKVGPIGSK…LTSIGIYVYP (153 aa)).

The protein belongs to the jacalin lectin family.

The protein is Jacalin-related lectin 24 (JAL24) of Arabidopsis thaliana (Mouse-ear cress).